The following is a 246-amino-acid chain: MLLIPAIDLKDGRCVRLRQGDLDEATVFSEDPAAMATHWLDLGARRLHLVDLNGAVAGKPKNDAPIKAILDAVGDDIPVQIGGGIRDLDTIESYLDAGISYVIIGTAAVKNPGFLQDACGAFPGHIIVGLDARDGKIATDGWSKLTRHDVLDLAKKFEDYGCEAIIYTDISRDGMLSGVNVDATVRLAQHVRIPVYASGGIAGLSDIEALCAVEEEGVEGAILGRSIYEGALDFQAAQARADELTQ.

Catalysis depends on Asp8, which acts as the Proton acceptor. The active-site Proton donor is the Asp131.

It belongs to the HisA/HisF family.

Its subcellular location is the cytoplasm. The catalysed reaction is 1-(5-phospho-beta-D-ribosyl)-5-[(5-phospho-beta-D-ribosylamino)methylideneamino]imidazole-4-carboxamide = 5-[(5-phospho-1-deoxy-D-ribulos-1-ylimino)methylamino]-1-(5-phospho-beta-D-ribosyl)imidazole-4-carboxamide. Its pathway is amino-acid biosynthesis; L-histidine biosynthesis; L-histidine from 5-phospho-alpha-D-ribose 1-diphosphate: step 4/9. The protein is 1-(5-phosphoribosyl)-5-[(5-phosphoribosylamino)methylideneamino] imidazole-4-carboxamide isomerase of Bordetella petrii (strain ATCC BAA-461 / DSM 12804 / CCUG 43448).